The primary structure comprises 701 residues: Potassium-transporting ATPase ATP-binding subunit 1 (701 aa).

The tract at residues 1–26 (MNPVAPTRKVKPPRNRPSDRRQARKK) is disordered. 4 helical membrane-spanning segments follow: residues 57-77 (MFVV…PDLF), 90-110 (GLLT…EAVA), 241-261 (VALT…IATL), and 278-298 (IALL…AIGI). Aspartate 329 (4-aspartylphosphate intermediate) is an active-site residue. ATP is bound by residues aspartate 366, glutamate 370, 397–404 (FSAKTRMS), and lysine 416. 2 residues coordinate Mg(2+): aspartate 539 and aspartate 543. 3 helical membrane-spanning segments follow: residues 599–619 (FSIA…FAAA), 635–655 (AVLS…PLAL), and 681–701 (VIAP…VGLA).

The protein belongs to the cation transport ATPase (P-type) (TC 3.A.3) family. Type IA subfamily. As to quaternary structure, the system is composed of three essential subunits: KdpA, KdpB and KdpC.

It localises to the cell inner membrane. It carries out the reaction K(+)(out) + ATP + H2O = K(+)(in) + ADP + phosphate + H(+). Its function is as follows. Part of the high-affinity ATP-driven potassium transport (or Kdp) system, which catalyzes the hydrolysis of ATP coupled with the electrogenic transport of potassium into the cytoplasm. This subunit is responsible for energy coupling to the transport system and for the release of the potassium ions to the cytoplasm. This is Potassium-transporting ATPase ATP-binding subunit 1 from Nostoc sp. (strain PCC 7120 / SAG 25.82 / UTEX 2576).